Consider the following 390-residue polypeptide: NADH-quinone oxidoreductase subunit D (390 aa).

The protein belongs to the complex I 49 kDa subunit family. In terms of assembly, NDH-1 is composed of 14 different subunits. Subunits NuoB, C, D, E, F, and G constitute the peripheral sector of the complex.

It localises to the cell membrane. It catalyses the reaction a quinone + NADH + 5 H(+)(in) = a quinol + NAD(+) + 4 H(+)(out). In terms of biological role, NDH-1 shuttles electrons from NADH, via FMN and iron-sulfur (Fe-S) centers, to quinones in the respiratory chain. The immediate electron acceptor for the enzyme in this species is believed to be ubiquinone. Couples the redox reaction to proton translocation (for every two electrons transferred, four hydrogen ions are translocated across the cytoplasmic membrane), and thus conserves the redox energy in a proton gradient. In Wolbachia sp. subsp. Brugia malayi (strain TRS), this protein is NADH-quinone oxidoreductase subunit D.